The chain runs to 362 residues: Guanine nucleotide-binding protein alpha-10 subunit (362 aa).

Gly-2 is lipidated: N-myristoyl glycine. A lipid anchor (S-palmitoyl cysteine) is attached at Cys-4. A G-alpha domain is found at Leu-35–Ile-362. The tract at residues Ser-38–Thr-51 is G1 motif. GTP is bound by residues Gly-43 to Ser-50, Val-184 to Thr-190, Asp-209 to Gln-213, Asn-278 to Asp-281, and Ala-335. Mg(2+) is bound by residues Ser-50 and Thr-190. Residues Asp-182–Thr-190 are G2 motif. Positions Leu-205–Arg-214 are G3 motif. The G4 motif stretch occupies residues Ile-274–Asp-281. Residues Thr-333 to Ser-337 form a G5 motif region.

The protein belongs to the G-alpha family. G proteins are composed of 3 units; alpha, beta and gamma. The alpha chain contains the guanine nucleotide binding site.

Guanine nucleotide-binding proteins (G proteins) are involved as modulators or transducers in various transmembrane signaling systems. This is Guanine nucleotide-binding protein alpha-10 subunit (gpa-10) from Caenorhabditis briggsae.